Reading from the N-terminus, the 474-residue chain is Crocetin glucosyltransferase, chloroplastic (474 aa).

A chloroplast-targeting transit peptide spans 1–45 (MVQQRHVLLITYPAQGHINPALQFAQRLLRMGIQVTLATSVYALS). H17 (proton acceptor) is an active-site residue. H17 provides a ligand contact to an anthocyanidin. UDP-alpha-D-glucose-binding residues include Q346, H361, W364, N365, S366, E369, D385, and Q386.

The protein belongs to the UDP-glycosyltransferase family. As to expression, ubiquitous.

The protein resides in the plastid. Its subcellular location is the chloroplast. It carries out the reaction crocetin + UDP-alpha-D-glucose = beta-D-glucosyl crocetin + UDP. The catalysed reaction is beta-D-glucosyl crocetin + UDP-alpha-D-glucose = bis(beta-D-glucosyl) crocetin + UDP. It catalyses the reaction beta-D-gentiobiosyl crocetin + UDP-alpha-D-glucose = beta-D-gentiobiosyl beta-D-glucosyl crocetin + UDP. Glucosyltransferase acting on a broad range of substrates, including crocetin, 4-coumaric acid, caffeic acid and ferulic acid. No activity with indol-3-acetic acid, bixin and norbixin, and no formation of O-glucosides. Involved with UGT94E5 in sequential glycosylation of crocetin to crocin (bis(beta-D-gentiobiosyl) crocetin). The protein is Crocetin glucosyltransferase, chloroplastic (UGT75L6) of Gardenia jasminoides (Cape jasmine).